The primary structure comprises 566 residues: MEIKHKKNRSLYIPYAGPVLLEFPLLNKGSAFSMEERSNFNLLGLLPEVVETIEEQAERAWRQFEDFKTDIDKHIYLRNIQDTNETLFYRLLENHLEVMMPIIYTPTVGSACERFSEIYRRARGVFISWPNRHNMDDILQNVPIHNIKVIVVTDGERILGLGDQGIGGMGIPIGKLSLYTACGGISPAYTLPIVLDVGTNNQQLLNDPLYMGWRHPRITDDEYYAFVDDFIQAVKQRWPNVLLQFEDFAQKNAMPLLERYRDEICCFNDDIQGTAAVTLGTLIAASRAAGSQLSEQKIVFLGAGSAGCGIAEQIIAWMRTEGGLSDEQARARVFMVDRFGLLTDNMPNLLSFQSKLVQKRDSLKGWDTQSDSISLLDVVRNAKPDILIGVSGQTGLFTEEIIREMHKHCARPIVMPLSNPTSRVEATPHDILNWTDGAALVATGSPFQPVTVKEKTYPIAQCNNAYIFPGIGLGIISSGALRVTDEMMMAASEALASHSPLVNTGSGLVLPPLTDIQQVSKDIAFAVGKMAQQQGVAVKTSAEALLQAIEENFWLPEYRSYRRTSI.

The active-site Proton donor is tyrosine 104. Residue arginine 157 coordinates NAD(+). The active-site Proton acceptor is the lysine 175. A divalent metal cation-binding residues include glutamate 246, aspartate 247, and aspartate 270. NAD(+) contacts are provided by aspartate 270 and asparagine 419.

Belongs to the malic enzymes family. As to quaternary structure, homotetramer. The cofactor is Mg(2+). Mn(2+) serves as cofactor.

The catalysed reaction is (S)-malate + NAD(+) = pyruvate + CO2 + NADH. It carries out the reaction oxaloacetate + H(+) = pyruvate + CO2. The protein is NAD-dependent malic enzyme of Cronobacter sakazakii (strain ATCC BAA-894) (Enterobacter sakazakii).